Here is a 350-residue protein sequence, read N- to C-terminus: Holliday junction branch migration complex subunit RuvB (350 aa).

The large ATPase domain (RuvB-L) stretch occupies residues Met1–Tyr186. Residues Leu25, Arg26, Gly67, Lys70, Thr71, Thr72, Glu133–Phe135, Arg176, Tyr186, and Arg223 contribute to the ATP site. Thr71 contacts Mg(2+). Residues Glu187 to Glu257 are small ATPAse domain (RuvB-S). The head domain (RuvB-H) stretch occupies residues Gly260–Pro350. Residues Arg296, Arg315, and Arg320 each coordinate DNA.

It belongs to the RuvB family. As to quaternary structure, homohexamer. Forms an RuvA(8)-RuvB(12)-Holliday junction (HJ) complex. HJ DNA is sandwiched between 2 RuvA tetramers; dsDNA enters through RuvA and exits via RuvB. An RuvB hexamer assembles on each DNA strand where it exits the tetramer. Each RuvB hexamer is contacted by two RuvA subunits (via domain III) on 2 adjacent RuvB subunits; this complex drives branch migration. In the full resolvosome a probable DNA-RuvA(4)-RuvB(12)-RuvC(2) complex forms which resolves the HJ.

Its subcellular location is the cytoplasm. The enzyme catalyses ATP + H2O = ADP + phosphate + H(+). In terms of biological role, the RuvA-RuvB-RuvC complex processes Holliday junction (HJ) DNA during genetic recombination and DNA repair, while the RuvA-RuvB complex plays an important role in the rescue of blocked DNA replication forks via replication fork reversal (RFR). RuvA specifically binds to HJ cruciform DNA, conferring on it an open structure. The RuvB hexamer acts as an ATP-dependent pump, pulling dsDNA into and through the RuvAB complex. RuvB forms 2 homohexamers on either side of HJ DNA bound by 1 or 2 RuvA tetramers; 4 subunits per hexamer contact DNA at a time. Coordinated motions by a converter formed by DNA-disengaged RuvB subunits stimulates ATP hydrolysis and nucleotide exchange. Immobilization of the converter enables RuvB to convert the ATP-contained energy into a lever motion, pulling 2 nucleotides of DNA out of the RuvA tetramer per ATP hydrolyzed, thus driving DNA branch migration. The RuvB motors rotate together with the DNA substrate, which together with the progressing nucleotide cycle form the mechanistic basis for DNA recombination by continuous HJ branch migration. Branch migration allows RuvC to scan DNA until it finds its consensus sequence, where it cleaves and resolves cruciform DNA. The polypeptide is Holliday junction branch migration complex subunit RuvB (Rhodospirillum rubrum (strain ATCC 11170 / ATH 1.1.1 / DSM 467 / LMG 4362 / NCIMB 8255 / S1)).